A 189-amino-acid chain; its full sequence is UPF0688 protein C1orf174 homolog (189 aa).

Positions 53-137 (QMAGDGGEAK…TTDPSVFFDE (85 aa)) are disordered. Composition is skewed to basic and acidic residues over residues 59–73 (GEAKRLPKRPFHGEV) and 93–103 (APGERRGKENS).

The protein belongs to the UPF0688 family.

The protein resides in the nucleus. The sequence is that of UPF0688 protein C1orf174 homolog from Danio rerio (Zebrafish).